The sequence spans 145 residues: MAFSSGLWGPCVHMSRAFSQRCFSTTGSLGAIQKMTRVRVVDNSALGNTPYHRPPRCIHVYNKNGVGKVGDRILLAIKGQKKKALIVGHRMPGPTMTPRFDSNNVVLIEDNGNPVGTRIKTPIPTSLRQREGEFSKVLAIAQNFV.

The N-terminal 30 residues, 1–30 (MAFSSGLWGPCVHMSRAFSQRCFSTTGSLG), are a transit peptide targeting the mitochondrion.

The protein belongs to the universal ribosomal protein uL14 family. Component of the mitochondrial ribosome large subunit (39S) which comprises a 16S rRNA and about 50 distinct proteins. Interacts with MALSU1.

Its subcellular location is the mitochondrion. Its function is as follows. May form part of 2 intersubunit bridges in the assembled ribosome. Upon binding to MALSU1, intersubunit bridge formation is blocked, preventing ribosome formation and repressing translation. This chain is Large ribosomal subunit protein uL14m (MRPL14), found in Bos taurus (Bovine).